We begin with the raw amino-acid sequence, 1019 residues long: Photoactivated adenylate cyclase subunit alpha-like protein FB (1019 aa).

In terms of domain architecture, BLUF 1 spans 55-148; sequence LRRLMYLSAS…GRLYGEWHMK (94 aa). A Guanylate cyclase 1 domain is found at 204–332; sequence VVTFIYLVEF…DCINTASRIT (129 aa). A BLUF 2 domain is found at 467–559; that stretch reads LITLTYISQA…REYGSPLDMT (93 aa). In terms of domain architecture, Guanylate cyclase 2 spans 615 to 744; the sequence is VLLATDICSF…EVSARVMEVV (130 aa). Low complexity predominate over residues 825-839; that stretch reads APGRGAPAGGIPSSP. The interval 825–862 is disordered; that stretch reads APGRGAPAGGIPSSPKVRPPGRTNSVSSYTPDPNEALD. The span at 846-855 shows a compositional bias: polar residues; that stretch reads RTNSVSSYTP.

Belongs to the adenylyl cyclase class-4/guanylyl cyclase family. Heterotetramer of two alpha and two beta subunits.

It is found in the cell projection. Its subcellular location is the cilium. It localises to the flagellum. This is Photoactivated adenylate cyclase subunit alpha-like protein FB from Euglena gracilis.